Reading from the N-terminus, the 337-residue chain is Transaldolase (337 aa).

Positions 1 to 10 match the Nuclear localization signal motif; it reads MSGSPVKRQR. The Schiff-base intermediate with substrate role is filled by Lys142. An N6-acetyllysine modification is found at Lys219. Phosphoserine is present on residues Ser237 and Ser256. N6-acetyllysine occurs at positions 269, 286, and 321.

It belongs to the transaldolase family. Type 1 subfamily. As to quaternary structure, homodimer. Interacts with KPNA1 and KPNA4.

Its subcellular location is the nucleus. The protein resides in the cytoplasm. It carries out the reaction D-sedoheptulose 7-phosphate + D-glyceraldehyde 3-phosphate = D-erythrose 4-phosphate + beta-D-fructose 6-phosphate. It functions in the pathway carbohydrate degradation; pentose phosphate pathway; D-glyceraldehyde 3-phosphate and beta-D-fructose 6-phosphate from D-ribose 5-phosphate and D-xylulose 5-phosphate (non-oxidative stage): step 2/3. Its function is as follows. Catalyzes the rate-limiting step of the non-oxidative phase in the pentose phosphate pathway. Catalyzes the reversible conversion of sedheptulose-7-phosphate and D-glyceraldehyde 3-phosphate into erythrose-4-phosphate and beta-D-fructose 6-phosphate. In Sus scrofa (Pig), this protein is Transaldolase (TALDO1).